Reading from the N-terminus, the 165-residue chain is MTQVTFKHNPVTLVGTERKVGDKAPNFTVVNRDLEEVTLHDYDGKVRLISVVPSIDTSVCSTQTRKFNEEASNLDNTVVLTISVDLPFAQKKWCAAEGLPNAITLSDHRDLSFGEAYGVIMKELRLLARSVFVVNAVGEIVYTEVVPEGSDHPNYEAAIEAAKKA.

Residues 18-164 (RKVGDKAPNF…YEAAIEAAKK (147 aa)) enclose the Thioredoxin domain. The Cysteine sulfenic acid (-SOH) intermediate role is filled by C60. A disulfide bridge links C60 with C94.

The protein belongs to the peroxiredoxin family. Tpx subfamily. As to quaternary structure, homodimer.

It carries out the reaction a hydroperoxide + [thioredoxin]-dithiol = an alcohol + [thioredoxin]-disulfide + H2O. Thiol-specific peroxidase that catalyzes the reduction of hydrogen peroxide and organic hydroperoxides to water and alcohols, respectively. Plays a role in cell protection against oxidative stress by detoxifying peroxides. This is Thiol peroxidase from Listeria monocytogenes serovar 1/2a (strain ATCC BAA-679 / EGD-e).